The chain runs to 92 residues: Small ribosomal subunit protein uS19 (92 aa).

It belongs to the universal ribosomal protein uS19 family.

Protein S19 forms a complex with S13 that binds strongly to the 16S ribosomal RNA. This is Small ribosomal subunit protein uS19 from Corynebacterium jeikeium (strain K411).